Consider the following 143-residue polypeptide: 18.1 kDa class I heat shock protein (143 aa).

Positions 29–143 (ENSAFVSTRI…PEVKSIEISS (115 aa)) constitute a sHSP domain.

This sequence belongs to the small heat shock protein (HSP20) family. As to quaternary structure, forms oligomeric structures.

Its subcellular location is the cytoplasm. The sequence is that of 18.1 kDa class I heat shock protein (HSP18.1) from Medicago sativa (Alfalfa).